Consider the following 525-residue polypeptide: Heat shock factor protein 1 (525 aa).

Residue Met-1 is modified to N-acetylmethionine. The segment at 15 to 120 (VPAFLTKLWT…LLENIKRKVT (106 aa)) is DNA-binding domain. N6-acetyllysine is present on Lys-80. Lys-91 bears the N6-acetyllysine; alternate mark. Residue Lys-91 forms a Glycyl lysine isopeptide (Lys-Gly) (interchain with G-Cter in SUMO2); alternate linkage. Lys-118 is modified (N6-acetyllysine). Ser-121 is subject to Phosphoserine; by MAPKAPK2. Residues Lys-126 and Lys-131 each participate in a glycyl lysine isopeptide (Lys-Gly) (interchain with G-Cter in SUMO2) cross-link. Positions 130–203 (IKIRQDSVTR…ISLVQSNRIL (74 aa)) are hydrophobic repeat HR-A/B. Phosphothreonine; by CK2 is present on Thr-142. Lys-150 and Lys-188 each carry N6-acetyllysine. Residues 203–224 (LGVKRKIPLMLSDSNSAHSVPK) are d domain. Lys-208 carries the post-translational modification N6-acetyllysine; alternate. A Glycyl lysine isopeptide (Lys-Gly) (interchain with G-Cter in SUMO2); alternate cross-link involves residue Lys-208. The residue at position 216 (Ser-216) is a Phosphoserine; by PLK1. The segment at 221-310 (SVPKYGRQYS…PPSPPHSPRV (90 aa)) is regulatory domain. Residue Lys-224 forms a Glycyl lysine isopeptide (Lys-Gly) (interchain with G-Cter in SUMO2) linkage. Ser-230 carries the post-translational modification Phosphoserine; by CAMK2A. Disordered stretches follow at residues 272 to 327 (APTS…PLSP) and 340 to 365 (PTPA…TPST). Phosphoserine is present on residues Ser-275 and Ser-292. N6-acetyllysine; alternate is present on Lys-298. Lys-298 is covalently cross-linked (Glycyl lysine isopeptide (Lys-Gly) (interchain with G-Cter in SUMO2); alternate). Lys-298 is covalently cross-linked (Glycyl lysine isopeptide (Lys-Gly) (interchain with G-Cter in SUMO); alternate). 4 positions are modified to phosphoserine: Ser-303, Ser-307, Ser-314, and Ser-319. Ser-320 carries the phosphoserine; by PKA modification. The residue at position 323 (Thr-323) is a Phosphothreonine. Position 326 is a phosphoserine; by MAPK12 (Ser-326). Over residues 343–355 (AASNTAPMDTTGA) the composition is skewed to polar residues. Ser-345 bears the Phosphoserine mark. Residues 367 to 525 (EKCLSVACLD…PHKAKDPTVS (159 aa)) are transactivation domain. The segment at 380–405 (LSDHLDAMDSNLDNLQTMLTSHGFSV) is hydrophobic repeat HR-C. The short motif at 408–416 (SALLDLFSP) is the 9aaTAD element. The residue at position 415 (Ser-415) is a Phosphoserine; by PLK1. At Ser-440 the chain carries Phosphoserine. 2 disordered regions span residues 441 to 460 (PQEP…SGKQ) and 495 to 525 (YFSE…PTVS). A compositionally biased stretch (basic and acidic residues) spans 515 to 525 (EPHKAKDPTVS). Lys-520 is subject to N6-acetyllysine.

It belongs to the HSF family. Monomer; cytoplasmic latent and transcriptionally inactive monomeric form in unstressed cells. Homotrimer; in response to stress, such as heat shock, homotrimerizes and translocates into the nucleus, binds to heat shock element (HSE) sequences in promoter of heat shock protein (HSP) genes and acquires transcriptional ability. Interacts (via monomeric form) with FKBP4; this interaction occurs in unstressed cells. Associates (via monomeric form) with HSP90 proteins in a multichaperone complex in unnstressed cell; this association maintains HSF1 in a non-DNA-binding and transcriptional inactive form by preventing HSF1 homotrimerization. Homotrimeric transactivation activity is modulated by protein-protein interactions and post-translational modifications. Interacts with HSP90AA1; this interaction is decreased in a IER5-dependent manner, promoting HSF1 accumulation in the nucleus, homotrimerization and DNA-binding activities. Part (via regulatory domain in the homotrimeric form) of a large heat shock-induced HSP90-dependent multichaperone complex at least composed of FKBP4, FKBP5, HSP90 proteins, PPID, PPP5C and PTGES3; this association maintains the HSF1 homotrimeric DNA-bound form in a transcriptionally inactive form. Interacts with BAG3 (via BAG domain); this interaction occurs in normal and heat-shocked cells promoting nuclear shuttling of HSF1 in a BAG3-dependent manner. Interacts (via homotrimeric and hyperphosphorylated form) with FKBP4; this interaction occurs upon heat shock in a HSP90-dependent multichaperone complex. Interacts (via homotrimeric form preferentially) with EEF1A proteins. In heat shocked cells, stress-denatured proteins compete with HSF1 homotrimeric DNA-bound form for association of the HSP90-dependent multichaperone complex, and hence alleviating repression of HSF1-mediated transcriptional activity. Interacts (via homotrimeric form preferentially) with DAXX; this interaction relieves homotrimeric HSF1 from repression of its transcriptional activity by HSP90-dependent multichaperone complex upon heat shock. Interacts (via D domain and preferentially with hyperphosphorylated form) with JNK1; this interaction occurs under both normal growth conditions and immediately upon heat shock. Interacts (via D domain and preferentially with hyperphosphorylated form) with MAPK3; this interaction occurs upon heat shock. Interacts with IER5 (via central region); this interaction promotes PPP2CA-induced dephosphorylation on Ser-121, Ser-307, Ser-314 and Thr-323 and HSF1 transactivation activity. Found in a ribonucleoprotein complex composed of the HSF1 homotrimeric form, translation elongation factor eEF1A proteins and non-coding RNA heat shock RNA-1 (HSR1); this complex occurs upon heat shock and stimulates HSF1 DNA-binding activity. Interacts (via transactivation domain) with HSPA1A/HSP70 and DNAJB1; these interactions result in the inhibition of heat shock- and HSF1-induced transcriptional activity during the attenuation and recovery phase from heat shock. Interacts (via Ser-303 and Ser-307 phosphorylated form) with YWHAE; this interaction promotes HSF1 sequestration in the cytoplasm in an ERK-dependent manner. Found in a complex with IER5 and PPP2CA. Interacts with TPR; this interaction increases upon heat shock and stimulates export of HSP70 mRNA. Interacts with SYMPK (via N-terminus) and CSTF2; these interactions occur upon heat shock. Interacts (via transactivation domain) with HSPA8. Interacts with EEF1D; this interaction occurs at heat shock promoter element (HSE) sequences. Interacts with MAPKAPK2. Interacts with PRKACA/PKA. Interacts (via transactivation domain) with GTF2A2. Interacts (via transactivation domain) with GTF2B. Interacts (via transactivation domain) with TBP. Interacts with CDK9, CCNT1 and EP300. Interacts (via N-terminus) with XRCC5 (via N-terminus) and XRCC6 (via N-terminus); these interactions are direct and prevent XRCC5/XRCC6 heterodimeric binding and non-homologous end joining (NHEJ) repair activities induced by ionizing radiation (IR). Interacts with PLK1; this interaction occurs during the early mitotic period, increases upon heat shock but does not modulate neither HSF1 homotrimerization and DNA-binding activities. Interacts (via Ser-216 phosphorylated form) with CDC20; this interaction occurs in mitosis in a MAD2L1-dependent manner and prevents PLK1-stimulated degradation of HSF1 by blocking the recruitment of the SCF(BTRC) ubiquitin ligase complex. Interacts with MAD2L1; this interaction occurs in mitosis. Interacts with BTRC; this interaction occurs during mitosis, induces its ubiquitin-dependent degradation following stimulus-dependent phosphorylation at Ser-216, a process inhibited by CDC20. Interacts with HSP90AA1 and HSP90AB1. Forms a complex with TTC5/STRAP and p300/EP300; these interactions augment chromatin-bound HSF1 and p300/EP300 histone acetyltransferase activity. Post-translationally, phosphorylated. Phosphorylated in unstressed cells; this phosphorylation is constitutive and implicated in the repression of HSF1 transcriptional activity. Phosphorylated on Ser-121 by MAPKAPK2; this phosphorylation promotes interaction with HSP90 proteins and inhibits HSF1 homotrimerization, DNA-binding and transactivation activities. Phosphorylation on Ser-303 by GSK3B/GSK3-beat and on Ser-307 by MAPK3 within the regulatory domain is involved in the repression of HSF1 transcriptional activity and occurs in a RAF1-dependent manner. Phosphorylation on Ser-303 and Ser-307 increases HSF1 nuclear export in a YWHAE- and XPO1/CRM1-dependent manner. Phosphorylation on Ser-307 is a prerequisite for phosphorylation on Ser-303. According to, Ser-303 is not phosphorylated in unstressed cells. Phosphorylated on Ser-415 by PLK1; phosphorylation promotes nuclear translocation upon heat shock. Hyperphosphorylated upon heat shock and during the attenuation and recovery phase period of the heat shock response. Phosphorylated on Thr-142; this phosphorylation increases HSF1 transactivation activity upon heat shock. Phosphorylation on Ser-230 by CAMK2A; this phosphorylation enhances HSF1 transactivation activity upon heat shock. Phosphorylation on Ser-326 by MAPK12; this phosphorylation enhances HSF1 nuclear translocation, homotrimerization and transactivation activities upon heat shock. Phosphorylated on Ser-320 by PRKACA/PKA; this phosphorylation promotes nuclear localization and transcriptional activity upon heat shock. Phosphorylated by MAPK8; this phosphorylation occurs upon heat shock, induces HSF1 translocation into nuclear stress bodies and negatively regulates transactivation activity. Neither basal nor stress-inducible phosphorylation on Ser-230, Ser-292, Ser-303, Ser-307, Ser-314, Ser-319, Ser-320, Thr-323, Ser-326, Ser-338, Ser-345, Ser-364 and Thr-365 within the regulatory domain is involved in the regulation of HSF1 subcellular localization or DNA-binding activity; however, it negatively regulates HSF1 transactivation activity. Phosphorylated on Ser-216 by PLK1 in the early mitotic period; this phosphorylation regulates HSF1 localization to the spindle pole, the recruitment of the SCF(BTRC) ubiquitin ligase complex inducing HSF1 degradation, and hence mitotic progression. Dephosphorylated on Ser-121, Ser-307, Ser-314 and Thr-323 by phosphatase PPP2CA in an IER5-dependent manner, leading to HSF1-mediated transactivation activity. Sumoylated with SUMO1 and SUMO2 upon heat shock in a ERK2-dependent manner. Sumoylated by SUMO1 on Lys-298; sumoylation occurs upon heat shock and promotes its localization to nuclear stress bodies and DNA-binding activity. Phosphorylation on Ser-303 and Ser-307 is probably a prerequisite for sumoylation. In terms of processing, acetylated on Lys-118; this acetylation is decreased in a IER5-dependent manner. Acetylated on Lys-118, Lys-208 and Lys-298; these acetylations occur in a EP300-dependent manner. Acetylated on Lys-80; this acetylation inhibits DNA-binding activity upon heat shock. Deacetylated on Lys-80 by SIRT1; this deacetylation increases DNA-binding activity. Post-translationally, ubiquitinated by SCF(BTRC) and degraded following stimulus-dependent phosphorylation at Ser-216 by PLK1 in mitosis. Polyubiquitinated. Undergoes proteasomal degradation upon heat shock and during the attenuation and recovery phase period of the heat shock response.

Its subcellular location is the nucleus. It is found in the cytoplasm. The protein localises to the nucleoplasm. The protein resides in the perinuclear region. It localises to the cytoskeleton. Its subcellular location is the spindle pole. It is found in the microtubule organizing center. The protein localises to the centrosome. The protein resides in the chromosome. It localises to the centromere. Its subcellular location is the kinetochore. Functionally, functions as a stress-inducible and DNA-binding transcription factor that plays a central role in the transcriptional activation of the heat shock response (HSR), leading to the expression of a large class of molecular chaperones, heat shock proteins (HSPs), that protect cells from cellular insult damage. In unstressed cells, is present in a HSP90-containing multichaperone complex that maintains it in a non-DNA-binding inactivated monomeric form. Upon exposure to heat and other stress stimuli, undergoes homotrimerization and activates HSP gene transcription through binding to site-specific heat shock elements (HSEs) present in the promoter regions of HSP genes. Upon heat shock stress, forms a chromatin-associated complex with TTC5/STRAP and p300/EP300 to stimulate HSR transcription, therefore increasing cell survival. Activation is reversible, and during the attenuation and recovery phase period of the HSR, returns to its unactivated form. Binds to inverted 5'-NGAAN-3' pentamer DNA sequences. Binds to chromatin at heat shock gene promoters. Activates transcription of transcription factor FOXR1 which in turn activates transcription of the heat shock chaperones HSPA1A and HSPA6 and the antioxidant NADPH-dependent reductase DHRS2. Binds the promoter region upstream of exon 1 of Mpv17l to activate expression of the M-LPS isoform which is involved in metabolism of reactive oxygen species. Also serves several other functions independently of its transcriptional activity. Involved in the repression of Ras-induced transcriptional activation of the c-fos gene in heat-stressed cells. Positively regulates pre-mRNA 3'-end processing and polyadenylation of HSP70 mRNA upon heat-stressed cells in a symplekin (SYMPK)-dependent manner. Plays a role in nuclear export of stress-induced HSP70 mRNA. Plays a role in the regulation of mitotic progression. Also plays a role as a negative regulator of non-homologous end joining (NHEJ) repair activity in a DNA damage-dependent manner. Involved in stress-induced cancer cell proliferation in a IER5-dependent manner. This Mus musculus (Mouse) protein is Heat shock factor protein 1.